We begin with the raw amino-acid sequence, 140 residues long: Methylglyoxal synthase (140 aa).

The region spanning 1–140 (MNIALIAHDE…KERQEKEGTP (140 aa)) is the MGS-like domain. Substrate contacts are provided by residues histidine 8, lysine 12, 34 to 37 (TGTT), and 54 to 55 (SG). The active-site Proton donor/acceptor is aspartate 60. Histidine 87 lines the substrate pocket.

Belongs to the methylglyoxal synthase family.

It catalyses the reaction dihydroxyacetone phosphate = methylglyoxal + phosphate. In terms of biological role, catalyzes the formation of methylglyoxal from dihydroxyacetone phosphate. The chain is Methylglyoxal synthase from Oceanobacillus iheyensis (strain DSM 14371 / CIP 107618 / JCM 11309 / KCTC 3954 / HTE831).